Consider the following 811-residue polypeptide: DNA mismatch repair protein MutS (811 aa).

595 to 602 (GPNMSGKS) contributes to the ATP binding site.

Belongs to the DNA mismatch repair MutS family.

This protein is involved in the repair of mismatches in DNA. It is possible that it carries out the mismatch recognition step. This protein has a weak ATPase activity. This chain is DNA mismatch repair protein MutS, found in Pseudothermotoga lettingae (strain ATCC BAA-301 / DSM 14385 / NBRC 107922 / TMO) (Thermotoga lettingae).